A 167-amino-acid polypeptide reads, in one-letter code: Endoribonuclease YbeY (167 aa).

Residues His131, His135, and His141 each contribute to the Zn(2+) site.

Belongs to the endoribonuclease YbeY family. Zn(2+) serves as cofactor.

The protein resides in the cytoplasm. Functionally, single strand-specific metallo-endoribonuclease involved in late-stage 70S ribosome quality control and in maturation of the 3' terminus of the 16S rRNA. The sequence is that of Endoribonuclease YbeY from Rickettsia prowazekii (strain Madrid E).